Here is a 327-residue protein sequence, read N- to C-terminus: Aspartate--ammonia ligase (327 aa).

Belongs to the class-II aminoacyl-tRNA synthetase family. AsnA subfamily.

The protein localises to the cytoplasm. It carries out the reaction L-aspartate + NH4(+) + ATP = L-asparagine + AMP + diphosphate + H(+). The protein operates within amino-acid biosynthesis; L-asparagine biosynthesis; L-asparagine from L-aspartate (ammonia route): step 1/1. The sequence is that of Aspartate--ammonia ligase from Mycoplasmoides gallisepticum (strain R(low / passage 15 / clone 2)) (Mycoplasma gallisepticum).